The primary structure comprises 338 residues: Phenylalanine--tRNA ligase alpha subunit (338 aa).

Mg(2+) is bound at residue Glu-252.

This sequence belongs to the class-II aminoacyl-tRNA synthetase family. Phe-tRNA synthetase alpha subunit type 1 subfamily. Tetramer of two alpha and two beta subunits. Mg(2+) serves as cofactor.

It is found in the cytoplasm. The catalysed reaction is tRNA(Phe) + L-phenylalanine + ATP = L-phenylalanyl-tRNA(Phe) + AMP + diphosphate + H(+). This Pseudomonas syringae pv. syringae (strain B728a) protein is Phenylalanine--tRNA ligase alpha subunit.